The following is a 123-amino-acid chain: Large ribosomal subunit protein bL12 (123 aa).

The protein belongs to the bacterial ribosomal protein bL12 family. In terms of assembly, homodimer. Part of the ribosomal stalk of the 50S ribosomal subunit. Forms a multimeric L10(L12)X complex, where L10 forms an elongated spine to which 2 to 4 L12 dimers bind in a sequential fashion. Binds GTP-bound translation factors.

Forms part of the ribosomal stalk which helps the ribosome interact with GTP-bound translation factors. Is thus essential for accurate translation. The polypeptide is Large ribosomal subunit protein bL12 (Mycoplasmopsis synoviae (strain 53) (Mycoplasma synoviae)).